The sequence spans 2197 residues: Protein Ycf2 (2197 aa).

Residue 1539–1546 (GSIGTGRS) participates in ATP binding.

The protein belongs to the Ycf2 family.

Its subcellular location is the plastid. The protein localises to the chloroplast stroma. Functionally, probable ATPase of unknown function. Its presence in a non-photosynthetic plant (Epifagus virginiana) and experiments in tobacco indicate that it has an essential function which is probably not related to photosynthesis. This is Protein Ycf2 from Ipomoea purpurea (Common morning glory).